The following is a 526-amino-acid chain: Glucose-6-phosphate isomerase (526 aa).

The Proton donor role is filled by E320. Catalysis depends on residues H349 and K453.

The protein belongs to the GPI family.

The protein resides in the cytoplasm. The catalysed reaction is alpha-D-glucose 6-phosphate = beta-D-fructose 6-phosphate. It participates in carbohydrate biosynthesis; gluconeogenesis. The protein operates within carbohydrate degradation; glycolysis; D-glyceraldehyde 3-phosphate and glycerone phosphate from D-glucose: step 2/4. Its function is as follows. Catalyzes the reversible isomerization of glucose-6-phosphate to fructose-6-phosphate. The sequence is that of Glucose-6-phosphate isomerase from Gloeothece citriformis (strain PCC 7424) (Cyanothece sp. (strain PCC 7424)).